Reading from the N-terminus, the 280-residue chain is Dimethylglycine N-methyltransferase (280 aa).

This sequence belongs to the methyltransferase superfamily. In terms of assembly, monomer.

It carries out the reaction N,N-dimethylglycine + S-adenosyl-L-methionine = glycine betaine + S-adenosyl-L-homocysteine + H(+). The protein operates within amine and polyamine biosynthesis; betaine biosynthesis via glycine pathway; betaine from glycine: step 3/3. In terms of biological role, catalyzes the methylation of dimethylglycine to betaine with S-adenosylmethionine (AdoMet) acting as the methyl donor. It has strict specificity for dimethylglycine as the methyl group acceptors. In Parasynechococcus marenigrum (strain WH8102), this protein is Dimethylglycine N-methyltransferase.